The sequence spans 531 residues: MDTTNQSEDIKPCDSDLMESILMFDEPISDILAHNKLWISHARTRSNFFPQEGRHISNQHTEAATSLKMWMLSKNLVVIVKRKDDIFPCKILTRNPENLFVARFLESGKEKHIQVEYSDIIMTRSELEKALPLCQHLIPARNWDDFYIIRDFEKATPYFEQGLSALVKPGQQFELQLEDAPDFYVMATVVKNYRGFLLVEYQNFKRWIHMLSPYCHEIGWGKNEKQEYLKRGPYNRHMNVDLVAGLVKQSTNQKLGAVPEIVFRNNCPVPHRIPEYSACVYLDLDQKRFYFAHKVTTKTCRNNRHFFNISIGKNLVTSKQNNRPYEFHVYHPRILPYSVAKRMEVQIILPPDVKLLPDESNLDGYLRTYCNPCDKHKTSDRVQPSPKIAKKKNGPLLLDDTPDAMFRSRPLLGDNIGAHKEWTNFMNHIPDYKRKDLLKSMDTLKFCEIFRPTPTGALQLTAAEVTGQQECMLRLKVSGEDEPVYIHNADPHLYHLGACLDMELAINFHGEFFDEKPLKKNKNANNGFSSF.

In terms of tissue distribution, expressed ubiquitously.

The protein localises to the cytoplasm. Its subcellular location is the nucleus. Its function is as follows. Probably acts synergistically with sop-2 to maintain the transcriptionally repressive state of homeotic genes in order to regulate various neurogenic identities. Specification of some neuronal identities also involves expression of non-Hox genes. Specifies dopaminergic and serotonergic neuronal cell fate, and regulates neurotransmitter choice and axon pathfinding. The polypeptide is Sop-2-related protein 3 (sor-3) (Caenorhabditis elegans).